Consider the following 398-residue polypeptide: Stomatin-like protein 1 (398 aa).

The Tyrosine-type lysosomal sorting signal signature appears at 6 to 10; it reads GYRAL. A Phosphoserine modification is found at serine 28. A helical; Signal-anchor for type III membrane protein membrane pass occupies residues 58 to 78; the sequence is LISFLGFLLLLVTFPISGWFA. Topologically, residues 79–398 are cytoplasmic; that stretch reads LKIVPTYERM…KLEAVLRALK (320 aa). The SCP2 domain maps to 287 to 398; that stretch reads KQPLAEGLLT…KLEAVLRALK (112 aa).

The protein belongs to the band 7/mec-2 family. In terms of assembly, interacts with STOM; may redistribute STOM from the plasma membrane to late endosomes. Interacts with FBXW7 isoform 3 and CDK2. In terms of tissue distribution, ubiquitously expressed at low levels. Expression is highest in brain.

Its subcellular location is the membrane. It localises to the late endosome membrane. It is found in the membrane raft. The protein localises to the cell membrane. The protein resides in the cytoplasmic vesicle. May play a role in cholesterol transfer to late endosomes. May play a role in modulating membrane acid-sensing ion channels. Can specifically inhibit proton-gated current of ASIC1 isoform 1. Can increase inactivation speed of ASIC3. May be involved in regulation of proton sensing in dorsal root ganglions. May play a role in protecting FBXW7 isoform 3 from degradation. The chain is Stomatin-like protein 1 (STOML1) from Homo sapiens (Human).